A 417-amino-acid chain; its full sequence is uncharacterized protein (417 aa).

4 helical membrane-spanning segments follow: residues 87 to 107 (LVVA…GYWI), 130 to 150 (IAGT…TPSV), 177 to 197 (FFIT…VYAA), and 202 to 222 (IIDT…LWPD). The span at 366 to 398 (APSAPAAAEHKATSSSNSSNSSPGSSNPTTAPT) shows a compositional bias: low complexity. A disordered region spans residues 366-417 (APSAPAAAEHKATSSSNSSNSSPGSSNPTTAPTDKFRTGSPKTQPEKISAFW).

The protein belongs to the YccS/YhfK family.

The protein resides in the cell membrane. This is an uncharacterized protein from Neisseria gonorrhoeae.